We begin with the raw amino-acid sequence, 333 residues long: Protein FanF (333 aa).

The signal sequence occupies residues 1–22 (MKNKYNLLFFLFLLCYGDVALA).

In terms of processing, three disulfide bonds are present.

Its subcellular location is the fimbrium. In terms of biological role, minor component of K99 fimbriae. Is not required for binding of K99 fimbriae to the ganglioside receptor. May play a role in initiation, elongation and flexibility of the fimbriae. The chain is Protein FanF (fanF) from Escherichia coli.